The following is a 182-amino-acid chain: Adenine phosphoribosyltransferase (182 aa).

The protein belongs to the purine/pyrimidine phosphoribosyltransferase family. In terms of assembly, homodimer.

Its subcellular location is the cytoplasm. It carries out the reaction AMP + diphosphate = 5-phospho-alpha-D-ribose 1-diphosphate + adenine. The protein operates within purine metabolism; AMP biosynthesis via salvage pathway; AMP from adenine: step 1/1. Functionally, catalyzes a salvage reaction resulting in the formation of AMP, that is energically less costly than de novo synthesis. The polypeptide is Adenine phosphoribosyltransferase (Pseudomonas fluorescens (strain Pf0-1)).